Reading from the N-terminus, the 292-residue chain is Ribosomal protein L11 methyltransferase (292 aa).

The S-adenosyl-L-methionine site is built by T145, G166, D188, and N229.

Belongs to the methyltransferase superfamily. PrmA family.

It localises to the cytoplasm. It catalyses the reaction L-lysyl-[protein] + 3 S-adenosyl-L-methionine = N(6),N(6),N(6)-trimethyl-L-lysyl-[protein] + 3 S-adenosyl-L-homocysteine + 3 H(+). Functionally, methylates ribosomal protein L11. The polypeptide is Ribosomal protein L11 methyltransferase (Nitrosococcus oceani (strain ATCC 19707 / BCRC 17464 / JCM 30415 / NCIMB 11848 / C-107)).